The primary structure comprises 296 residues: Probable AP endonuclease (296 aa).

C16 and C20 form a disulfide bridge. H78, H115, E142, H182, H218, D231, H233, and E271 together coordinate Zn(2+).

The protein belongs to the AP endonuclease 2 family. Zn(2+) is required as a cofactor.

The protein resides in the host nucleus. It localises to the host cytoplasm. The protein localises to the virion. In terms of biological role, endonuclease of the viral base excision repair system that catalyzes DNA cleavage reaction at the apurinic or apyrimidinic sites (AP sites). Cleaves phosphodiester bonds on the 5' side of AP sites. In addition to endonuclease activity, the AP endonuclease has a proofreading 3'-5' exonuclease activity that is considerably more efficient in the elimination of a mismatch than in that of a correctly paired base. Displays 3'-phosphatase and 3'-repair diesterase activities. The single nucleotide gaps generated by the AP endonuclease are filled by the viral repair DNA polymerase X and the DNA ligase. This Ornithodoros (relapsing fever ticks) protein is Probable AP endonuclease.